We begin with the raw amino-acid sequence, 2522 residues long: Unconventional myosin-IXAa (2522 aa).

The region spanning Ser15 to Leu113 is the Ras-associating domain. The 861-residue stretch at Lys147–His1007 folds into the Myosin motor domain. Residues Ile176–Tyr196 traverse the membrane as a helical segment. Gly240–Thr247 contributes to the ATP binding site. Positions Val767 to Ser802 are disordered. Positions Ser777 to Asn786 are enriched in polar residues. The tract at residues Leu888–Ser910 is actin-binding. IQ domains are found at residues Ser1012–Gln1039, Gln1063–Leu1092, Gln1102–Arg1131, and Gln1125–Lys1154. The neck or regulatory domain stretch occupies residues Ser1012 to Gln1149. The interval Lys1150 to Arg2497 is tail. 6 disordered regions span residues Gly1218 to Arg1254, Asp1318 to Arg1409, Asn1424 to Phe1612, Asn1630 to Arg1754, Arg1799 to Arg1827, and Leu1962 to Asp1983. The segment covering Thr1229–Gln1242 has biased composition (basic and acidic residues). Composition is skewed to polar residues over residues Ser1330–Asp1349 and Ser1366–Thr1390. Composition is skewed to basic and acidic residues over residues Pro1399 to Arg1408 and Ala1426 to Asp1435. The span at Ala1437 to Ser1454 shows a compositional bias: polar residues. A coiled-coil region spans residues Val1456 to Glu1525. Basic and acidic residues-rich tracts occupy residues Glu1458–Glu1484, Ile1492–Arg1523, Pro1549–Asp1566, and Leu1580–Ser1589. 2 stretches are compositionally biased toward polar residues: residues Lys1594–Met1604 and Gln1631–Val1641. Positions Pro1656 to Arg1665 are enriched in basic residues. Residues Gly1681–Glu1690 are compositionally biased toward acidic residues. Basic and acidic residues-rich tracts occupy residues Leu1738–Val1753 and Leu1810–Pro1822. The Phorbol-ester/DAG-type zinc-finger motif lies at Gly1990 to Cys2039. Residues Val2054–Tyr2242 form the Rho-GAP domain. Disordered stretches follow at residues Pro2274–Lys2325 and Leu2348–Val2522. Positions Gln2317–Glu2344 form a coiled coil. Residues Thr2366 to Asp2383 are compositionally biased toward polar residues. Residues Ser2413–Ser2429 show a composition bias toward low complexity. Residues Arg2436–Ser2448 show a composition bias toward basic residues. Basic and acidic residues predominate over residues Arg2497–Glu2506.

Belongs to the TRAFAC class myosin-kinesin ATPase superfamily. Myosin family.

It localises to the membrane. It is found in the cytoplasm. The protein resides in the synapse. Its subcellular location is the cell projection. The protein localises to the growth cone. In terms of biological role, myosins are actin-based motor molecules with ATPase activity. Unconventional myosins serve in intracellular movements. Regulates Rho by stimulating it's GTPase activity in neurons. Required for the regulation of neurite branching and motor neuron axon guidance. This chain is Unconventional myosin-IXAa (myo9aa), found in Danio rerio (Zebrafish).